A 309-amino-acid chain; its full sequence is Putative glycosyltransferase 48 (309 aa).

It belongs to the glycosyltransferase group 1 family. Glycosyltransferase 4 subfamily.

In Saccharolobus islandicus (Sulfolobus islandicus), this protein is Putative glycosyltransferase 48 (SIFV0048).